The chain runs to 340 residues: Ketol-acid reductoisomerase (NADP(+)) (340 aa).

The KARI N-terminal Rossmann domain maps to 3 to 182 (VTMYYEEDVE…GCARVGIIET (180 aa)). NADP(+) contacts are provided by residues 26–29 (YGSQ), R49, S53, and 83–86 (DELQ). The active site involves H108. G134 is a binding site for NADP(+). A KARI C-terminal knotted domain is found at 183 to 328 (TFKEETEEDL…AELRKAMPFT (146 aa)). Mg(2+)-binding residues include D191, E195, E227, and E231. S252 is a binding site for substrate.

It belongs to the ketol-acid reductoisomerase family. Requires Mg(2+) as cofactor.

It carries out the reaction (2R)-2,3-dihydroxy-3-methylbutanoate + NADP(+) = (2S)-2-acetolactate + NADPH + H(+). The catalysed reaction is (2R,3R)-2,3-dihydroxy-3-methylpentanoate + NADP(+) = (S)-2-ethyl-2-hydroxy-3-oxobutanoate + NADPH + H(+). The protein operates within amino-acid biosynthesis; L-isoleucine biosynthesis; L-isoleucine from 2-oxobutanoate: step 2/4. It participates in amino-acid biosynthesis; L-valine biosynthesis; L-valine from pyruvate: step 2/4. In terms of biological role, involved in the biosynthesis of branched-chain amino acids (BCAA). Catalyzes an alkyl-migration followed by a ketol-acid reduction of (S)-2-acetolactate (S2AL) to yield (R)-2,3-dihydroxy-isovalerate. In the isomerase reaction, S2AL is rearranged via a Mg-dependent methyl migration to produce 3-hydroxy-3-methyl-2-ketobutyrate (HMKB). In the reductase reaction, this 2-ketoacid undergoes a metal-dependent reduction by NADPH to yield (R)-2,3-dihydroxy-isovalerate. In Lactococcus lactis subsp. cremoris (strain SK11), this protein is Ketol-acid reductoisomerase (NADP(+)).